Consider the following 421-residue polypeptide: tRNA (guanine(37)-N(1))-methyltransferase (421 aa).

Residues Arg-198, 242–243 (DL), 270–271 (DA), and Asn-293 contribute to the S-adenosyl-L-methionine site.

The protein belongs to the class I-like SAM-binding methyltransferase superfamily. TRM5/TYW2 family. As to quaternary structure, monomer.

The protein resides in the mitochondrion matrix. It localises to the nucleus. Its subcellular location is the cytoplasm. The catalysed reaction is guanosine(37) in tRNA + S-adenosyl-L-methionine = N(1)-methylguanosine(37) in tRNA + S-adenosyl-L-homocysteine + H(+). Functionally, specifically methylates the N1 position of guanosine-37 in various cytoplasmic and mitochondrial tRNAs. Methylation is not dependent on the nature of the nucleoside 5' of the target nucleoside. This is the first step in the biosynthesis of wybutosine (yW), a modified base adjacent to the anticodon of tRNAs and required for accurate decoding. In Paramecium tetraurelia, this protein is tRNA (guanine(37)-N(1))-methyltransferase.